Here is a 688-residue protein sequence, read N- to C-terminus: Envelope glycoprotein gp70 (688 aa).

Over residues 1 to 15 (MPNHQSGSPTGSSDL) the composition is skewed to polar residues. The interval 1–31 (MPNHQSGSPTGSSDLLLSGKKQRPHLALRRK) is disordered. The first 98 residues, 1–98 (MPNHQSGSPT…SVLGPPPVTG (98 aa)), serve as a signal peptide directing secretion. The span at 20 to 31 (KKQRPHLALRRK) shows a compositional bias: basic residues. Over 99-624 (ESYWAYLPKP…ALNPLDWTQY (526 aa)) the chain is Extracellular. N-linked (GlcNAc...) asparagine; by host glycosylation is found at asparagine 127 and asparagine 143. The stretch at 426-474 (LLPVDIGDEPWFDDSAIQTFRYATDLIRAKRFVAAIILGISALIAIITS) forms a coiled coil. Residues 455 to 456 (KR) constitute a propeptide that is removed on maturation. The fusion peptide stretch occupies residues 457–477 (FVAAIILGISALIAIITSFAV). Residues 463-481 (LGISALIAIITSFAVATTA) are immunosuppression. Asparagine 498 is a glycosylation site (N-linked (GlcNAc...) asparagine; by host). Positions 511–541 (LKLEARLNALEEVVLELGQDVANLKTRMSTR) form a coiled coil. Asparagine 557 is a glycosylation site (N-linked (GlcNAc...) asparagine; by host). The chain crosses the membrane as a helical span at residues 625–645 (FIFIGVGALLLVIVLMIFPIV). Topologically, residues 646–688 (FQCLAKSLDQVQSDLNVLLLKKKKGGNAAPAAEMVELPRVSYT) are cytoplasmic.

The mature envelope protein (Env) consists of a trimer of SU-TM heterodimers attached by noncovalent interactions or by a labile interchain disulfide bond. Specific enzymatic cleavages in vivo yield mature proteins. Envelope glycoproteins are synthesized as an inactive precursor that is N-glycosylated and processed likely by host cell furin or by a furin-like protease in the Golgi to yield the mature SU and TM proteins. The cleavage site between SU and TM requires the minimal sequence [KR]-X-[KR]-R.

The protein resides in the virion membrane. It is found in the host cell membrane. The surface protein (SU) attaches the virus to the host cell by binding to its receptor. This interaction triggers the refolding of the transmembrane protein (TM) and is thought to activate its fusogenic potential by unmasking its fusion peptide. Fusion occurs at the host cell plasma membrane. In terms of biological role, the transmembrane protein (TM) acts as a class I viral fusion protein. Under the current model, the protein has at least 3 conformational states: pre-fusion native state, pre-hairpin intermediate state, and post-fusion hairpin state. During viral and target cell membrane fusion, the coiled coil regions (heptad repeats) assume a trimer-of-hairpins structure, positioning the fusion peptide in close proximity to the C-terminal region of the ectodomain. The formation of this structure appears to drive apposition and subsequent fusion of viral and target cell membranes. Membranes fusion leads to delivery of the nucleocapsid into the cytoplasm. The protein is Envelope glycoprotein gp70 (env) of Mus musculus (Mouse).